The sequence spans 296 residues: Homoserine kinase (296 aa).

Residue 86 to 96 (KAGSGLGSSAA) coordinates ATP.

The protein belongs to the GHMP kinase family. Homoserine kinase subfamily.

It is found in the cytoplasm. It catalyses the reaction L-homoserine + ATP = O-phospho-L-homoserine + ADP + H(+). Its pathway is amino-acid biosynthesis; L-threonine biosynthesis; L-threonine from L-aspartate: step 4/5. Functionally, catalyzes the ATP-dependent phosphorylation of L-homoserine to L-homoserine phosphate. The chain is Homoserine kinase (thrB) from Methanocaldococcus jannaschii (strain ATCC 43067 / DSM 2661 / JAL-1 / JCM 10045 / NBRC 100440) (Methanococcus jannaschii).